Here is a 788-residue protein sequence, read N- to C-terminus: MVRTKNQSSSSSASSSSHKSPIKSHGGSGSAAAGTAGHPVSRSSSSHRTSIDDRKSATNVSSSSNRRTTPGSSPDGDGDDDTTTTDDLTPTSTSAPRSAGGPSSVHKQNLYVVSFPIIFLFNVLRSLIYQLFCIFRYLYGASTKVIYRPHRRDCNIEIVVQNNSNNKDQKHQQLTSSQSLNYPLEVTSGEAASEQQVQQPLPQQRYRALQPLEMAGANRSGSGYSPGPGDPLLAKQKHHHRRAFEYISKALKIDEENEGHKELAIELYRKGIKELEDGIAVDCWSGRGDVWDRAQRLHDKMQTNLSMARDRLHFLALREEDFQMHRLSLKEKQKANESREQQQKPQKAREAADKPMLTNLTNDPAKLKTRSSGYGPKNGLTTPRIFATATTPTSSSSLASGRKLTIGTKRPGNLAVAANKSQTLPRNLGSKTSVGAVRQPGKTAATPPAVRRQFSSGRNTPPQRSRTPINNNGASGSGSGASTPVVTVKGVEQKLVQLILDEIVEGGAKVEWTDIAGQEVAKQALQEMVILPSVRPELFTGLRAPAKGLLLFGPPGNGKTLLARAVATECSATFLNISAASLTSKYVGDGEKLVRALFAVARHLQPSIIFIDEVDSLLSERSSGEHEASRRLKTEFLVEFDGLPGNPDGDRIVVLAATNRPQELDEAALRRFTKRVYVSLPDEQTRELLLNRLLQKQGSPLDTDALRRLSKITDGYSGSDLTALAKDAALEPIRELNVEQVKCLDINAMRHITEKDFHNSLKRIRRSVAPQSLSLYEKWSSDYGDITI.

Positions 1 to 105 (MVRTKNQSSS…PRSAGGPSSV (105 aa)) are disordered. The Cytoplasmic portion of the chain corresponds to 1–116 (MVRTKNQSSS…KQNLYVVSFP (116 aa)). Residues 1-227 (MVRTKNQSSS…NRSGSGYSPG (227 aa)) form a required for localization to punctate cytoplasmic foci region. Composition is skewed to low complexity over residues 8-48 (SSSS…SSHR) and 57-75 (ATNV…SSPD). Residues 117–137 (IIFLFNVLRSLIYQLFCIFRY) constitute an intramembrane region (helical). Topologically, residues 138-788 (LYGASTKVIY…WSSDYGDITI (651 aa)) are cytoplasmic. Residues 227–788 (GPGDPLLAKQ…WSSDYGDITI (562 aa)) form a sufficient for interaction with microtubules and microtubule severing region. Residues 240–315 (HRRAFEYISK…SMARDRLHFL (76 aa)) form the MIT domain. Positions 331–353 (EKQKANESREQQQKPQKAREAAD) are enriched in basic and acidic residues. Residues 331–484 (EKQKANESRE…SGSGSGASTP (154 aa)) are disordered. A compositionally biased stretch (low complexity) spans 387–400 (ATATTPTSSSSLAS). Composition is skewed to polar residues over residues 419 to 433 (NKSQ…SKTS) and 453 to 469 (QFSS…RTPI). Positions 471–485 (NNGASGSGSGASTPV) are required for interaction with microtubules. 553-560 (GPPGNGKT) is an ATP binding site.

The protein belongs to the AAA ATPase family. Spastin subfamily. In terms of assembly, homohexamer. The homohexamer is stabilized by ATP-binding. The homohexamer may adopt a ring conformation through which microtubules pass prior to being severed. Interacts with microtubules. Interacts with atl; may be involved in microtubule dynamics.

It localises to the membrane. The protein resides in the cytoplasm. The protein localises to the cytoskeleton. It is found in the microtubule organizing center. Its subcellular location is the centrosome. It localises to the chromosome. The protein resides in the lipid droplet. The catalysed reaction is n ATP + n H2O + a microtubule = n ADP + n phosphate + (n+1) alpha/beta tubulin heterodimers.. In terms of biological role, ATP-dependent microtubule severing protein. Stimulates microtubule minus-end depolymerization and poleward microtubule flux in the mitotic spindle. Regulates microtubule stability in the neuromuscular junction synapse. Involved in lipid metabolism by regulating the size and distribution of lipid droplets. Involved in axon regeneration by regulating microtubule severing. This chain is Spastin, found in Drosophila persimilis (Fruit fly).